The chain runs to 167 residues: Small heat shock protein C1 (167 aa).

Residues 59-167 (PFYESNSIKS…EQDAKEIPIN (109 aa)) form the sHSP domain.

It belongs to the small heat shock protein (HSP20) family.

This chain is Small heat shock protein C1 (hspC1), found in Rickettsia bellii (strain RML369-C).